We begin with the raw amino-acid sequence, 541 residues long: Chaperonin GroEL 2 (541 aa).

Residues 30–33 (TLGP), Lys-51, 87–91 (DGTTT), Gly-415, and Asp-496 contribute to the ATP site.

Belongs to the chaperonin (HSP60) family. In terms of assembly, forms a cylinder of 14 subunits composed of two heptameric rings stacked back-to-back. Interacts with the co-chaperonin GroES.

Its subcellular location is the cytoplasm. It carries out the reaction ATP + H2O + a folded polypeptide = ADP + phosphate + an unfolded polypeptide.. Functionally, together with its co-chaperonin GroES, plays an essential role in assisting protein folding. The GroEL-GroES system forms a nano-cage that allows encapsulation of the non-native substrate proteins and provides a physical environment optimized to promote and accelerate protein folding. The polypeptide is Chaperonin GroEL 2 (Bradyrhizobium sp. (strain BTAi1 / ATCC BAA-1182)).